A 224-amino-acid chain; its full sequence is LexA repressor (224 aa).

The H-T-H motif DNA-binding region spans 38–58 (IREIGDAVGLTSTSSVAHQLR). Residues 71-82 (NRPRAVDVRGID) are compositionally biased toward basic and acidic residues. The interval 71-96 (NRPRAVDVRGIDDAGTPSATTDVIGS) is disordered. Catalysis depends on for autocatalytic cleavage activity residues Ser-148 and Lys-185.

It belongs to the peptidase S24 family. As to quaternary structure, homodimer.

The enzyme catalyses Hydrolysis of Ala-|-Gly bond in repressor LexA.. Functionally, represses a number of genes involved in the response to DNA damage (SOS response), including recA and lexA. In the presence of single-stranded DNA, RecA interacts with LexA causing an autocatalytic cleavage which disrupts the DNA-binding part of LexA, leading to derepression of the SOS regulon and eventually DNA repair. The protein is LexA repressor of Mycobacteroides abscessus (strain ATCC 19977 / DSM 44196 / CCUG 20993 / CIP 104536 / JCM 13569 / NCTC 13031 / TMC 1543 / L948) (Mycobacterium abscessus).